A 441-amino-acid polypeptide reads, in one-letter code: CBL-interacting serine/threonine-protein kinase 6 (441 aa).

Positions 24 to 278 (YELGRLLGHG…IEKVMDSPWF (255 aa)) constitute a Protein kinase domain. ATP contacts are provided by residues 30 to 38 (LGHGTFAKV) and lysine 53. The active-site Proton acceptor is the aspartate 146. The interval 164 to 193 (DFGLSAFTEHLKQDGLLHTTCGTPAYVAPE) is activation loop. Residue serine 168 is modified to Phosphoserine. The residue at position 182 (threonine 182) is a Phosphothreonine. One can recognise an NAF domain in the interval 310 to 334 (EETETLNAFHIIALSEGFDLSPLFE). The tract at residues 341–371 (KREMRFATSRPASSVISSLEEAARVGNKFDV) is PPI.

It belongs to the protein kinase superfamily. CAMK Ser/Thr protein kinase family. SNF1 subfamily. Part of a K(+)-channel calcium-sensing kinase/phosphatase complex composed by a calcium sensor CBL (CBL1, CBL2, CBL3 or CBL9), a kinase CIPK (CIPK6, CIPK16 or CIPK23), a phosphatase PP2C (AIP1) and a K(+)-channel (AKT1). Interacts with AKT1, AKT2,CBL1, CBL2, CBL3, CBL4/SOS3 and CBL9. The cofactor is Mn(2+). Autophosphorylated. Expressed in roots and shoots.

It is found in the endoplasmic reticulum. The catalysed reaction is L-seryl-[protein] + ATP = O-phospho-L-seryl-[protein] + ADP + H(+). The enzyme catalyses L-threonyl-[protein] + ATP = O-phospho-L-threonyl-[protein] + ADP + H(+). In terms of biological role, CIPK serine-threonine protein kinases interact with CBL proteins. Binding of a CBL protein to the regulatory NAF domain of CIPK protein lead to the activation of the kinase in a calcium-dependent manner. Downstream of CBL1, CBL2, CBL3 and CBL9, regulates by phosphorylation the K(+) conductance and uptake of AKT1. Binds to CBL4 to modulate AKT2 activity by promoting a kinase interaction-dependent but phosphorylation-independent translocation of the channel to the plasma membrane. This chain is CBL-interacting serine/threonine-protein kinase 6 (CIPK6), found in Arabidopsis thaliana (Mouse-ear cress).